The following is a 135-amino-acid chain: ATP synthase epsilon chain (135 aa).

It belongs to the ATPase epsilon chain family. F-type ATPases have 2 components, CF(1) - the catalytic core - and CF(0) - the membrane proton channel. CF(1) has five subunits: alpha(3), beta(3), gamma(1), delta(1), epsilon(1). CF(0) has three main subunits: a, b and c.

Its subcellular location is the cell inner membrane. In terms of biological role, produces ATP from ADP in the presence of a proton gradient across the membrane. This is ATP synthase epsilon chain from Granulibacter bethesdensis (strain ATCC BAA-1260 / CGDNIH1).